The chain runs to 887 residues: Amyloid-beta-like protein (887 aa).

A signal peptide spans 1–27 (MCAALRRNLLLRSLWVVLAIGTAQVQA). Topologically, residues 28-813 (ASPRWEPQIA…HAAKEGRNVY (786 aa)) are extracellular. The interval 30–133 (PRWEPQIAVL…KPFRCLGPFQ (104 aa)) is GFLD subdomain. The 170-residue stretch at 30 to 199 (PRWEPQIAVL…SGVEFVCCPK (170 aa)) folds into the E1 domain. 6 disulfides stabilise this stretch: cysteine 40–cysteine 70, cysteine 81–cysteine 128, cysteine 106–cysteine 116, cysteine 143–cysteine 197, cysteine 154–cysteine 184, and cysteine 168–cysteine 196. The interval 141 to 199 (EGCLFDHIHNASRCWPFVRWNQTGAAACQERGMQMRSFAMLLPCGISVFSGVEFVCCPK) is cuBD subdomain. N-linked (GlcNAc...) asparagine glycosylation is found at asparagine 150 and asparagine 161. 2 disordered regions span residues 225–365 (NDEL…STPQ) and 377–396 (NSGN…QPTS). N-linked (GlcNAc...) asparagine glycosylation is found at asparagine 237 and asparagine 240. Acidic residues predominate over residues 246-267 (NEDDLDDEDDLMGDDEEDDMVA). A compositionally biased stretch (low complexity) spans 268-292 (DEAATAGGSPNTGSSGDSNSGSLDD). Over residues 293–321 (INAEYDSGEEGDNYEEDGAGSESEAEVEA) the composition is skewed to acidic residues. The span at 329-352 (AKVVSLKSDSSSPSSAPVAPAPEK) shows a compositional bias: low complexity. The E2 domain maps to 395 to 597 (TSDPYFTHFD…AKIAQLMNDY (203 aa)). Asparagine 574 carries an N-linked (GlcNAc...) asparagine glycan. The disordered stretch occupies residues 675-743 (KSQVAEQQSQ…TEYGEATVSS (69 aa)). The span at 681–699 (QQSQPTQSSTQSQAQQQQQ) shows a compositional bias: low complexity. A helical transmembrane segment spans residues 814–834 (FTLSFAGIALMAAVFVGVAVA). Residues 835-887 (KWRTSRSPHAQGFIEVDQNVTTHHPIVREEKIVPNMQINGYENPTYKYFEVKE) lie on the Cytoplasmic side of the membrane. A YENPXY motif motif is present at residues 875-880 (YENPTY).

It belongs to the APP family. Interacts (via the intracellular domain, ICD) with APP-BP1. Expressed in postmitotic neurons in the central and peripheral nervous systems. Within the nervous system, transcripts are not observed in neuroblasts, newly generated neurons and at least one class of presumed glial cells.

The protein resides in the membrane. Functionally, during development, plays a role in the regulation of the neddylation pathway. Appl and APP-BP1 interact antagonistically during development. The protein is Amyloid-beta-like protein (Appl) of Drosophila melanogaster (Fruit fly).